The chain runs to 247 residues: 14-3-3 protein gamma (247 aa).

At M1 the chain carries N-acetylmethionine; in 14-3-3 protein gamma; alternate; partial. At V2 the chain carries N-acetylvaline; in 14-3-3 protein gamma, N-terminally processed; partial. The residue at position 2 (V2) is an N-acetylvaline; partial. Residues 2–166 (VDREQLVQKA…AHEISKEHMQ (165 aa)) are required for interaction with SPATA18/MIEAP (isoform 2) but dispensable for binding to SPATA18/MIEAP (isoform 1). Residues 2-247 (VDREQLVQKA…QDDDGGEGNN (246 aa)) are interaction with SPATA18/MIEAP. Phosphoserine is present on S71. The residue at position 133 (Y133) is a Phosphotyrosine. Phosphothreonine is present on T145. S215 is modified (phosphoserine). Position 234 is a phosphothreonine (T234). Position 235 is a phosphoserine (S235).

It belongs to the 14-3-3 family. Homodimer. Part of a complex that contains DSG3, PKP1, YAP1 and YWHAG; the complex is required for localization of DSG3 and YAP1 to the cell membrane in keratinocytes. Interacts with SAMSN1. Interacts with RAF1, SSH1 and CRTC2/TORC2. Interacts with ABL1 (phosphorylated form); the interaction retains it in the cytoplasm. Interacts with GAB2. Interacts with MDM4 (phosphorylated); negatively regulates MDM4 activity toward TP53. Interacts with PKA-phosphorylated AANAT and SIRT2. Interacts with the 'Thr-369' phosphorylated form of DAPK2. Interacts with PI4KB, TBC1D22A and TBC1D22B. Interacts with SLITRK1. Interacts with LRRK2; this interaction is dependent on LRRK2 phosphorylation. Interacts with MARK2 and MARK3. Interacts with MEFV. Interacts with ENDOG, TSC2 and PIK3C3; interaction with ENDOG weakens its interaction with TSC2 and PIK3C3. Interacts with (phosphorylated) WDR24. Interacts with BEST1; this interaction promotes L-glutamate channel activity leading to the positive regulation of NMDA glutamate receptor activity through the L-glutamate secretion. Interacts with PKP1 (when phosphorylated); the interaction results in translocation of PKP1 to the cytoplasm and loss of intercellular adhesion in keratinocytes. Interacts with SPATA18/MIEAP (isoforms 1 and 2); a protein that also plays a role in MALM. In terms of processing, phosphorylated by various PKC isozymes. Highly expressed in brain, skeletal muscle, and heart.

It localises to the cytoplasm. Its subcellular location is the cytosol. It is found in the mitochondrion matrix. In terms of biological role, adapter protein implicated in the regulation of a large spectrum of both general and specialized signaling pathways. Binds to a large number of partners, usually by recognition of a phosphoserine or phosphothreonine motif. Binding generally results in the modulation of the activity of the binding partner. Promotes inactivation of WDR24 component of the GATOR2 complex by binding to phosphorylated WDR24. Participates in the positive regulation of NMDA glutamate receptor activity by promoting the L-glutamate secretion through interaction with BEST1. Reduces keratinocyte intercellular adhesion, via interacting with PKP1 and sequestering it in the cytoplasm, thereby reducing its incorporation into desmosomes. Plays a role in mitochondrial protein catabolic process (also named MALM) that promotes the degradation of damaged proteins inside mitochondria. In Homo sapiens (Human), this protein is 14-3-3 protein gamma.